The following is a 296-amino-acid chain: Phosphatidylglycerol--prolipoprotein diacylglyceryl transferase (296 aa).

3 consecutive transmembrane segments (helical) span residues 17–37 (LAVR…IVVG), 59–79 (MMFY…VLFY), and 97–117 (GGMS…LFAW). Arg142 is a binding site for a 1,2-diacyl-sn-glycero-3-phospho-(1'-sn-glycerol). 2 helical membrane-spanning segments follow: residues 230–250 (MGAI…TVEF) and 265–285 (LSMG…MMIW).

The protein belongs to the Lgt family.

The protein resides in the cell inner membrane. It catalyses the reaction L-cysteinyl-[prolipoprotein] + a 1,2-diacyl-sn-glycero-3-phospho-(1'-sn-glycerol) = an S-1,2-diacyl-sn-glyceryl-L-cysteinyl-[prolipoprotein] + sn-glycerol 1-phosphate + H(+). The protein operates within protein modification; lipoprotein biosynthesis (diacylglyceryl transfer). Functionally, catalyzes the transfer of the diacylglyceryl group from phosphatidylglycerol to the sulfhydryl group of the N-terminal cysteine of a prolipoprotein, the first step in the formation of mature lipoproteins. This Burkholderia pseudomallei (strain 668) protein is Phosphatidylglycerol--prolipoprotein diacylglyceryl transferase.